The primary structure comprises 419 residues: Histidine--tRNA ligase (419 aa).

Belongs to the class-II aminoacyl-tRNA synthetase family. Homodimer.

It is found in the cytoplasm. It catalyses the reaction tRNA(His) + L-histidine + ATP = L-histidyl-tRNA(His) + AMP + diphosphate + H(+). The protein is Histidine--tRNA ligase of Halothermothrix orenii (strain H 168 / OCM 544 / DSM 9562).